Consider the following 338-residue polypeptide: Mitochondrial E3 ubiquitin protein ligase 1 (338 aa).

Residues 1–3 are Cytoplasmic-facing; that stretch reads MEF. The chain crosses the membrane as a helical span at residues 4 to 24; the sequence is LHESVALGVDLLILGLCAREY. Residues 25–227 lie on the Mitochondrial intermembrane side of the membrane; it reads VHYKRTAKVL…LIKRFEDAKT (203 aa). Residues 228-248 traverse the membrane as a helical segment; the sequence is TTILKLVVCSTISAILVAFIA. The Cytoplasmic segment spans residues 249-338; the sequence is KKLYRKRKQE…IVSKAAAFIA (90 aa). Residues 290 to 326 form an RING-type zinc finger; sequence CVVCSTNPKEIILLPCGHVCLCEDCAQKISVTCPVCR.

In terms of assembly, interacts with Marf. Post-translationally, auto-ubiquitinated.

It localises to the mitochondrion outer membrane. It carries out the reaction S-ubiquitinyl-[E2 ubiquitin-conjugating enzyme]-L-cysteine + [acceptor protein]-L-lysine = [E2 ubiquitin-conjugating enzyme]-L-cysteine + N(6)-ubiquitinyl-[acceptor protein]-L-lysine.. Functionally, exhibits weak E3 ubiquitin-protein ligase activity. E3 ubiquitin ligases accept ubiquitin from an E2 ubiquitin-conjugating enzyme in the form of a thioester and then directly transfer the ubiquitin to targeted substrates. Plays a role in the control of mitochondrial morphology by promoting mitochondrial fission. Negatively regulates the mitochondrial fusion protein marf by promoting its ubiquitination, acting in a pathway that is parallel to the park/pink1 regulatory pathway. The chain is Mitochondrial E3 ubiquitin protein ligase 1 from Drosophila melanogaster (Fruit fly).